Reading from the N-terminus, the 454-residue chain is Bifunctional protein GlmU (454 aa).

Residues 1–226 (MALNVVILAA…AIEVEGANNR (226 aa)) form a pyrophosphorylase region. UDP-N-acetyl-alpha-D-glucosamine contacts are provided by residues 8–11 (LAAG), Lys22, Gln73, 78–79 (GT), 100–102 (YGD), Gly137, Glu151, Asn166, and Asn224. Residue Asp102 coordinates Mg(2+). Residue Asn224 coordinates Mg(2+). Positions 227–247 (VQLAQLERAYQARAAEKLMLE) are linker. Residues 248 to 454 (GANLRDPARI…GWPRPVKLKK (207 aa)) form an N-acetyltransferase region. Residues Arg330 and Lys348 each coordinate UDP-N-acetyl-alpha-D-glucosamine. His360 (proton acceptor) is an active-site residue. Tyr363 and Asn374 together coordinate UDP-N-acetyl-alpha-D-glucosamine. Acetyl-CoA contacts are provided by residues Ala377, 383–384 (NY), Ser402, Ala420, and Arg437.

The protein in the N-terminal section; belongs to the N-acetylglucosamine-1-phosphate uridyltransferase family. It in the C-terminal section; belongs to the transferase hexapeptide repeat family. Homotrimer. Mg(2+) serves as cofactor.

It localises to the cytoplasm. It catalyses the reaction alpha-D-glucosamine 1-phosphate + acetyl-CoA = N-acetyl-alpha-D-glucosamine 1-phosphate + CoA + H(+). It carries out the reaction N-acetyl-alpha-D-glucosamine 1-phosphate + UTP + H(+) = UDP-N-acetyl-alpha-D-glucosamine + diphosphate. The protein operates within nucleotide-sugar biosynthesis; UDP-N-acetyl-alpha-D-glucosamine biosynthesis; N-acetyl-alpha-D-glucosamine 1-phosphate from alpha-D-glucosamine 6-phosphate (route II): step 2/2. Its pathway is nucleotide-sugar biosynthesis; UDP-N-acetyl-alpha-D-glucosamine biosynthesis; UDP-N-acetyl-alpha-D-glucosamine from N-acetyl-alpha-D-glucosamine 1-phosphate: step 1/1. It functions in the pathway bacterial outer membrane biogenesis; LPS lipid A biosynthesis. In terms of biological role, catalyzes the last two sequential reactions in the de novo biosynthetic pathway for UDP-N-acetylglucosamine (UDP-GlcNAc). The C-terminal domain catalyzes the transfer of acetyl group from acetyl coenzyme A to glucosamine-1-phosphate (GlcN-1-P) to produce N-acetylglucosamine-1-phosphate (GlcNAc-1-P), which is converted into UDP-GlcNAc by the transfer of uridine 5-monophosphate (from uridine 5-triphosphate), a reaction catalyzed by the N-terminal domain. In Shewanella woodyi (strain ATCC 51908 / MS32), this protein is Bifunctional protein GlmU.